A 310-amino-acid chain; its full sequence is Homoserine kinase (310 aa).

91–101 contacts ATP; the sequence is PIGSGLGSSAC.

It belongs to the GHMP kinase family. Homoserine kinase subfamily.

It is found in the cytoplasm. It carries out the reaction L-homoserine + ATP = O-phospho-L-homoserine + ADP + H(+). It participates in amino-acid biosynthesis; L-threonine biosynthesis; L-threonine from L-aspartate: step 4/5. Functionally, catalyzes the ATP-dependent phosphorylation of L-homoserine to L-homoserine phosphate. This Escherichia coli O157:H7 protein is Homoserine kinase.